We begin with the raw amino-acid sequence, 582 residues long: Probable DNA ligase (582 aa).

An ATP-binding site is contributed by Glu248. The active-site N6-AMP-lysine intermediate is the Lys250. Residues Arg255, Arg270, Glu299, Phe339, Arg416, and Lys422 each contribute to the ATP site.

The protein belongs to the ATP-dependent DNA ligase family. Mg(2+) is required as a cofactor.

It carries out the reaction ATP + (deoxyribonucleotide)n-3'-hydroxyl + 5'-phospho-(deoxyribonucleotide)m = (deoxyribonucleotide)n+m + AMP + diphosphate.. In terms of biological role, DNA ligase that seals nicks in double-stranded DNA during DNA replication, DNA recombination and DNA repair. This Persephonella marina (strain DSM 14350 / EX-H1) protein is Probable DNA ligase.